We begin with the raw amino-acid sequence, 505 residues long: MLDKRCSGILLHPTSLPSRFGIGDLGDGAFQFIDFLADADQSVWQILPLGPTGFGNSPYLCYSALAINPWLISLDRLAEEGFLPPSLLDQAPPFTNPRVDYDQAIAYKSQVLKQAFAQFRTNIELAIEQEFAEFCQAQSDWLADYALFMAIKEAHNGAGWHQWDKDIAWREPEALKIWGDRLKTEVLYHQFLQFLGFRQWQEVKAYANQRHIAIFGDLPIYVAHDSADVWANPENFCLDPETGEAAMMAGVPPDYFSATGQLWGNPVYDWETLKATGFAWWIKRFKANLQYLDIVRIDHFRGFESYWGVPQGEKTAENGEWYPAPGKEFFQALGKALGDNLPIVAEDLGVITPEVEALRDEFNFPGMKVLHFAFDSDRGNPFLPFNYSNGNAVVYTGTHDNDTTVGWFQERSEDDQQKVINYLGCVCNEGIHWSLIRLASSSVAALAIFPLQDILGLGSDCRMNLPGTAAGNWGWRYHPDQLNDWLSGHLSFITELYGRRIYHTD.

Belongs to the disproportionating enzyme family.

It localises to the cytoplasm. It catalyses the reaction Transfers a segment of a (1-&gt;4)-alpha-D-glucan to a new position in an acceptor, which may be glucose or a (1-&gt;4)-alpha-D-glucan.. The chain is 4-alpha-glucanotransferase (malQ) from Synechocystis sp. (strain ATCC 27184 / PCC 6803 / Kazusa).